We begin with the raw amino-acid sequence, 359 residues long: MMNIKTNPFKAVSFVESAIKKALDNAGYLIAEIKYDGVRGNICVDNTANSYWLSRVSKTIPALEHLNGFDVRWKRLLNDDRCFYKDGFMLDGELMVKGVDFNTGSGLLRTKWTDTKNQEFHEELFVEPIRKKDKVPFKLHTGHLHIKLYAILPLHIVESGEDCDVMTLLMQEHVKNMLPLLQEYFPEIEWQAAESYEVYDMVELQQLYEQKRAEGHEGLIVKDPMCIYKRGKKSGWWKMKPENEADGIIQGLVWGTKGLANEGKVIGFEVLLESGRLVNATNISRALMDEFTETVKEATLSQWGFFSPYGIGDNDACTINPYDGWACQISYMEETPDGSLRHPSFVMFRGTEDNPQEKM.

Residues 32-35 (EIKY), R39, 55-57 (RVS), and E93 contribute to the ATP site. Residue K34 is the N6-AMP-lysine intermediate of the active site. E217 is an a divalent metal cation binding site. K232 and K238 together coordinate ATP.

This sequence belongs to the ATP-dependent DNA ligase family. The cofactor is a divalent metal cation.

The enzyme catalyses ATP + (deoxyribonucleotide)n-3'-hydroxyl + 5'-phospho-(deoxyribonucleotide)m = (deoxyribonucleotide)n+m + AMP + diphosphate.. DNA ligase that seals nicks in double-stranded DNA during DNA replication, DNA recombination and DNA repair in an ATP-dependent reaction. Binds specifically to DNA nicks containing a 3'-OH and a 5'-phosphate group. In Escherichia phage T7 (Bacteriophage T7), this protein is DNA ligase.